The following is a 162-amino-acid chain: Lipoprotein signal peptidase (162 aa).

The next 4 helical transmembrane spans lie at 12–32, 42–62, 66–86, and 93–113; these read WFAL…YFNS, VVEG…FSFL, GGWQ…WLGW, and FSGL…GNVI. Residues Asp123 and Asp142 contribute to the active site. Residues 133 to 153 traverse the membrane as a helical segment; that stretch reads WYYPAFNLADSFICVGAALMV.

It belongs to the peptidase A8 family.

It localises to the cell inner membrane. It carries out the reaction Release of signal peptides from bacterial membrane prolipoproteins. Hydrolyzes -Xaa-Yaa-Zaa-|-(S,diacylglyceryl)Cys-, in which Xaa is hydrophobic (preferably Leu), and Yaa (Ala or Ser) and Zaa (Gly or Ala) have small, neutral side chains.. It functions in the pathway protein modification; lipoprotein biosynthesis (signal peptide cleavage). This protein specifically catalyzes the removal of signal peptides from prolipoproteins. In Chromobacterium violaceum (strain ATCC 12472 / DSM 30191 / JCM 1249 / CCUG 213 / NBRC 12614 / NCIMB 9131 / NCTC 9757 / MK), this protein is Lipoprotein signal peptidase.